The sequence spans 60 residues: Large ribosomal subunit protein bL32 (60 aa).

This sequence belongs to the bacterial ribosomal protein bL32 family.

This chain is Large ribosomal subunit protein bL32, found in Streptococcus pneumoniae serotype 19F (strain G54).